The chain runs to 758 residues: 5-methyltetrahydropteroyltriglutamate--homocysteine methyltransferase (758 aa).

Residues 17-20 (RELK) and lysine 114 each bind 5-methyltetrahydropteroyltri-L-glutamate. Residues 429–431 (IGS) and glutamate 482 each bind L-homocysteine. L-methionine-binding positions include 429–431 (IGS) and glutamate 482. Residues 513–514 (RC) and tryptophan 559 contribute to the 5-methyltetrahydropteroyltri-L-glutamate site. Aspartate 597 is a binding site for L-homocysteine. Aspartate 597 serves as a coordination point for L-methionine. Glutamate 603 is a 5-methyltetrahydropteroyltri-L-glutamate binding site. Zn(2+) is bound by residues histidine 639, cysteine 641, and glutamate 663. Residue histidine 692 is the Proton donor of the active site. Residue cysteine 724 coordinates Zn(2+).

The protein belongs to the vitamin-B12 independent methionine synthase family. Requires Zn(2+) as cofactor.

The catalysed reaction is 5-methyltetrahydropteroyltri-L-glutamate + L-homocysteine = tetrahydropteroyltri-L-glutamate + L-methionine. It functions in the pathway amino-acid biosynthesis; L-methionine biosynthesis via de novo pathway; L-methionine from L-homocysteine (MetE route): step 1/1. Catalyzes the transfer of a methyl group from 5-methyltetrahydrofolate to homocysteine resulting in methionine formation. This chain is 5-methyltetrahydropteroyltriglutamate--homocysteine methyltransferase, found in Buchnera aphidicola subsp. Acyrthosiphon pisum (strain APS) (Acyrthosiphon pisum symbiotic bacterium).